We begin with the raw amino-acid sequence, 339 residues long: Phosphate acyltransferase (339 aa).

Belongs to the PlsX family. Homodimer. Probably interacts with PlsY.

It localises to the cytoplasm. It carries out the reaction a fatty acyl-[ACP] + phosphate = an acyl phosphate + holo-[ACP]. The protein operates within lipid metabolism; phospholipid metabolism. Catalyzes the reversible formation of acyl-phosphate (acyl-PO(4)) from acyl-[acyl-carrier-protein] (acyl-ACP). This enzyme utilizes acyl-ACP as fatty acyl donor, but not acyl-CoA. The sequence is that of Phosphate acyltransferase from Moorella thermoacetica (strain ATCC 39073 / JCM 9320).